The primary structure comprises 1308 residues: Limbin (1308 aa).

An N-terminal signal peptide occupies residues 1–26 (MDPSGSRGRPTWVLAGGLLAVALALG). The Extracellular portion of the chain corresponds to 27–300 (GRGCLGASSR…VLPHHGLHAA (274 aa)). Positions 36-76 (RPRWRPLGAQPPRDPQVAPRSGPGLRIPPGRSGAGPESSTQ) are disordered. A glycan (N-linked (GlcNAc...) asparagine) is linked at Asn-220. The chain crosses the membrane as a helical span at residues 301–321 (GFFIAFLLSLVLTWAALFLMV). The Cytoplasmic portion of the chain corresponds to 322 to 1308 (RYQCLKGNML…KKAMRALGMD (987 aa)). Coiled-coil stretches lie at residues 455–578 (TAEC…ELMD), 636–800 (DQME…DRDQ), and 1001–1113 (ASEM…EADT). Basic and acidic residues predominate over residues 784–801 (MAARAEQLEGEERDRDQE). The disordered stretch occupies residues 784 to 816 (MAARAEQLEGEERDRDQEGVQSVRQRLKDDAPE).

Component of the EvC complex composed of EFCAB7, IQCE, EVC2 and EVC; built from two subcomplexes, EVC2:EVC and EFCAB7:IQCE. Interacts with EVC. Interacts (via N-terminal end) with EFCAB7. Interacts (via N-terminal end) with IQCE. Found in the heart, placenta, lung, liver, skeletal muscle, kidney and pancreas.

It localises to the cell membrane. Its subcellular location is the cytoplasm. The protein localises to the cytoskeleton. It is found in the cilium basal body. The protein resides in the cell projection. It localises to the cilium. Its subcellular location is the cilium membrane. The protein localises to the nucleus. In terms of biological role, component of the EvC complex that positively regulates ciliary Hedgehog (Hh) signaling. Plays a critical role in bone formation and skeletal development. May be involved in early embryonic morphogenesis. The protein is Limbin (EVC2) of Homo sapiens (Human).